We begin with the raw amino-acid sequence, 71 residues long: uncharacterized protein (71 aa).

The span at 20-32 shows a compositional bias: polar residues; it reads SSGRRQLTATQPR. The tract at residues 20-46 is disordered; that stretch reads SSGRRQLTATQPRSDPESQRGRTSSNR.

This is an uncharacterized protein from Rhizobium leguminosarum.